The chain runs to 309 residues: NADH-cytochrome b5 reductase 1 (309 aa).

The chain crosses the membrane as a helical span at residues 30 to 50; the sequence is FVPYAVAVTAILAGLKLFTGG. Residues 60 to 165 enclose the FAD-binding FR-type domain; the sequence is TEFQEFVLKE…RGPKGAMVYT (106 aa). Residues 145-160 and 171-208 each bind FAD; these read TTLK…GPKG and HIGM…KLDL.

Belongs to the flavoprotein pyridine nucleotide cytochrome reductase family. In terms of assembly, monomer. Component of the 2-(3-amino-3-carboxypropyl)histidine synthase complex composed of dph1, dph2, dph3 and a NADH-dependent reductase, predominantly cbr1. Requires FAD as cofactor.

It localises to the mitochondrion outer membrane. It catalyses the reaction 2 Fe(III)-[cytochrome b5] + NADH = 2 Fe(II)-[cytochrome b5] + NAD(+) + H(+). It carries out the reaction 2 Fe(3+)-[Dph3] + NADH = 2 Fe(2+)-[Dph3] + NAD(+) + H(+). The protein operates within protein modification; peptidyl-diphthamide biosynthesis. In terms of biological role, NADH-dependent reductase for dph3 and cytochrome b5. Required for the first step of diphthamide biosynthesis, a post-translational modification of histidine which occurs in elongation factor 2. Dph1 and dph2 transfer a 3-amino-3-carboxypropyl (ACP) group from S-adenosyl-L-methionine (SAM) to a histidine residue, the reaction is assisted by a reduction system comprising dph3 and a NADH-dependent reductase, predominantly cbr1. By reducing dph3, also involved in the formation of the tRNA wobble base modification mcm5s 2U (5-methoxycarbonylmethyl-2-thiouridine), mediated by the elongator complex. The cytochrome b5/NADH cytochrome b5 reductase electron transfer system supports the catalytic activity of several sterol biosynthetic enzymes. The chain is NADH-cytochrome b5 reductase 1 (cbr1) from Aspergillus fumigatus (strain ATCC MYA-4609 / CBS 101355 / FGSC A1100 / Af293) (Neosartorya fumigata).